The primary structure comprises 269 residues: Serine/threonine-protein kinase ZRK7 (269 aa).

In terms of domain architecture, Protein kinase spans 80–269; it reads FDWSYAIGVD…KNRLMVTVIT (190 aa). Residues 86–94 and lysine 106 each bind ATP; that span reads IGVDRFVWY. The active-site Proton acceptor is aspartate 205.

The protein belongs to the protein kinase superfamily. Ser/Thr protein kinase family. ZRK subfamily.

The catalysed reaction is L-seryl-[protein] + ATP = O-phospho-L-seryl-[protein] + ADP + H(+). The enzyme catalyses L-threonyl-[protein] + ATP = O-phospho-L-threonyl-[protein] + ADP + H(+). This is Serine/threonine-protein kinase ZRK7 from Arabidopsis thaliana (Mouse-ear cress).